The sequence spans 439 residues: Tol-Pal system protein TolB (439 aa).

The signal sequence occupies residues 1–22; the sequence is MKKPLRWLAALTVLLLPLSALA.

The protein belongs to the TolB family. In terms of assembly, the Tol-Pal system is composed of five core proteins: the inner membrane proteins TolA, TolQ and TolR, the periplasmic protein TolB and the outer membrane protein Pal. They form a network linking the inner and outer membranes and the peptidoglycan layer.

Its subcellular location is the periplasm. Its function is as follows. Part of the Tol-Pal system, which plays a role in outer membrane invagination during cell division and is important for maintaining outer membrane integrity. This Xanthomonas oryzae pv. oryzae (strain KACC10331 / KXO85) protein is Tol-Pal system protein TolB.